The following is a 436-amino-acid chain: 3-ketoacyl-CoA thiolase (436 aa).

Cysteine 99 functions as the Acyl-thioester intermediate in the catalytic mechanism. Residues histidine 392 and cysteine 422 each act as proton acceptor in the active site.

The protein belongs to the thiolase-like superfamily. Thiolase family. As to quaternary structure, heterotetramer of two alpha chains (FadJ) and two beta chains (FadI).

The protein resides in the cytoplasm. It catalyses the reaction an acyl-CoA + acetyl-CoA = a 3-oxoacyl-CoA + CoA. Its pathway is lipid metabolism; fatty acid beta-oxidation. Functionally, catalyzes the final step of fatty acid oxidation in which acetyl-CoA is released and the CoA ester of a fatty acid two carbons shorter is formed. This chain is 3-ketoacyl-CoA thiolase, found in Escherichia coli O7:K1 (strain IAI39 / ExPEC).